A 554-amino-acid polypeptide reads, in one-letter code: MTSTAPPKVQYEAVIGLEVHVQLSTETKLFCRCSTRFGNTPNTNICPICTGQPGTLPVLNQQALDYAVLTASALNCQIHPQGLSKFDRKQYFYPDLPKNYQISQYDLPLAERGWLEIEVEGEPAKRIGITRLHMEEDAGKLVHAGADRLSGSTHSLVDFNRAGVALCEIVSEPDIRTAAEAAAYAGELRRIVRYLGVCDGNMQEGSLRFDLNISVRPAGEGKFGTKVEIKNLNSFNSLQRAVEYEFARQVDCLLSGERIVQETRLWDEATQRTISMRSKEEANDYRYFPEPDLVPIALNGTQIDAYRQRLGELPAQKRHRYRETLGLSSYDAGVLTDEREVAEYFEQVVALGIPAKQAANFVSGAVAAHLNETRRSISQIKVTPEVSAELLALINQGIISNRIANELLPDLFEKGGSPRALVEERGLTQISDRGQLEQIVDEVLAGESDSVAAYRGGRTKLLGFFVGKVMKKTAGRADPQVVNDLLQSKLAEQPTAPPPEPESAAETPEAPPAVEDAPPEAPTEAITAEAGSAEAITAASEEPDTPVSHQDAHA.

Residues 491–554 (AEQPTAPPPE…TPVSHQDAHA (64 aa)) are disordered. Residues 502-540 (ESAAETPEAPPAVEDAPPEAPTEAITAEAGSAEAITAAS) are compositionally biased toward low complexity.

It belongs to the GatB/GatE family. GatB subfamily. As to quaternary structure, heterotrimer of A, B and C subunits.

The catalysed reaction is L-glutamyl-tRNA(Gln) + L-glutamine + ATP + H2O = L-glutaminyl-tRNA(Gln) + L-glutamate + ADP + phosphate + H(+). The enzyme catalyses L-aspartyl-tRNA(Asn) + L-glutamine + ATP + H2O = L-asparaginyl-tRNA(Asn) + L-glutamate + ADP + phosphate + 2 H(+). Functionally, allows the formation of correctly charged Asn-tRNA(Asn) or Gln-tRNA(Gln) through the transamidation of misacylated Asp-tRNA(Asn) or Glu-tRNA(Gln) in organisms which lack either or both of asparaginyl-tRNA or glutaminyl-tRNA synthetases. The reaction takes place in the presence of glutamine and ATP through an activated phospho-Asp-tRNA(Asn) or phospho-Glu-tRNA(Gln). The chain is Aspartyl/glutamyl-tRNA(Asn/Gln) amidotransferase subunit B from Gloeobacter violaceus (strain ATCC 29082 / PCC 7421).